The sequence spans 123 residues: uncharacterized protein (123 aa).

A helical transmembrane segment spans residues 1–21 (MHIIAKSILLMAVSFLVIIFT).

It localises to the membrane. This is an uncharacterized protein from Methanocaldococcus jannaschii (strain ATCC 43067 / DSM 2661 / JAL-1 / JCM 10045 / NBRC 100440) (Methanococcus jannaschii).